A 352-amino-acid chain; its full sequence is UDP-3-O-acylglucosamine N-acyltransferase (352 aa).

His257 serves as the catalytic Proton acceptor.

This sequence belongs to the transferase hexapeptide repeat family. LpxD subfamily. Homotrimer.

The enzyme catalyses a UDP-3-O-[(3R)-3-hydroxyacyl]-alpha-D-glucosamine + a (3R)-hydroxyacyl-[ACP] = a UDP-2-N,3-O-bis[(3R)-3-hydroxyacyl]-alpha-D-glucosamine + holo-[ACP] + H(+). The protein operates within bacterial outer membrane biogenesis; LPS lipid A biosynthesis. In terms of biological role, catalyzes the N-acylation of UDP-3-O-acylglucosamine using 3-hydroxyacyl-ACP as the acyl donor. Is involved in the biosynthesis of lipid A, a phosphorylated glycolipid that anchors the lipopolysaccharide to the outer membrane of the cell. This Methylobacterium nodulans (strain LMG 21967 / CNCM I-2342 / ORS 2060) protein is UDP-3-O-acylglucosamine N-acyltransferase.